A 509-amino-acid polypeptide reads, in one-letter code: ATP synthase subunit alpha (509 aa).

G171–T178 is an ATP binding site.

This sequence belongs to the ATPase alpha/beta chains family. As to quaternary structure, F-type ATPases have 2 components, CF(1) - the catalytic core - and CF(0) - the membrane proton channel. CF(1) has five subunits: alpha(3), beta(3), gamma(1), delta(1), epsilon(1). CF(0) has three main subunits: a(1), b(2) and c(9-12). The alpha and beta chains form an alternating ring which encloses part of the gamma chain. CF(1) is attached to CF(0) by a central stalk formed by the gamma and epsilon chains, while a peripheral stalk is formed by the delta and b chains.

The protein resides in the cell inner membrane. It carries out the reaction ATP + H2O + 4 H(+)(in) = ADP + phosphate + 5 H(+)(out). In terms of biological role, produces ATP from ADP in the presence of a proton gradient across the membrane. The alpha chain is a regulatory subunit. In Ehrlichia chaffeensis (strain ATCC CRL-10679 / Arkansas), this protein is ATP synthase subunit alpha.